The chain runs to 234 residues: ATP-dependent dethiobiotin synthetase BioD (234 aa).

An ATP-binding site is contributed by 12–17; it reads DVGKTF. Threonine 16 is a Mg(2+) binding site. The active site involves lysine 37. Residue threonine 41 coordinates substrate. Residues aspartate 54 and 115 to 118 each bind ATP; that span reads EGAG. 2 residues coordinate Mg(2+): aspartate 54 and glutamate 115.

The protein belongs to the dethiobiotin synthetase family. As to quaternary structure, homodimer. Mg(2+) serves as cofactor.

It is found in the cytoplasm. The enzyme catalyses (7R,8S)-7,8-diammoniononanoate + CO2 + ATP = (4R,5S)-dethiobiotin + ADP + phosphate + 3 H(+). Its pathway is cofactor biosynthesis; biotin biosynthesis; biotin from 7,8-diaminononanoate: step 1/2. Its function is as follows. Catalyzes a mechanistically unusual reaction, the ATP-dependent insertion of CO2 between the N7 and N8 nitrogen atoms of 7,8-diaminopelargonic acid (DAPA, also called 7,8-diammoniononanoate) to form a ureido ring. The protein is ATP-dependent dethiobiotin synthetase BioD of Lysinibacillus sphaericus (Bacillus sphaericus).